The sequence spans 209 residues: ATP-dependent Clp protease proteolytic subunit (209 aa).

The active-site Nucleophile is the Ser-106. Residue His-131 is part of the active site.

Belongs to the peptidase S14 family. Fourteen ClpP subunits assemble into 2 heptameric rings which stack back to back to give a disk-like structure with a central cavity, resembling the structure of eukaryotic proteasomes.

It is found in the cytoplasm. It carries out the reaction Hydrolysis of proteins to small peptides in the presence of ATP and magnesium. alpha-casein is the usual test substrate. In the absence of ATP, only oligopeptides shorter than five residues are hydrolyzed (such as succinyl-Leu-Tyr-|-NHMec, and Leu-Tyr-Leu-|-Tyr-Trp, in which cleavage of the -Tyr-|-Leu- and -Tyr-|-Trp bonds also occurs).. In terms of biological role, cleaves peptides in various proteins in a process that requires ATP hydrolysis. Has a chymotrypsin-like activity. Plays a major role in the degradation of misfolded proteins. This Brucella canis (strain ATCC 23365 / NCTC 10854 / RM-666) protein is ATP-dependent Clp protease proteolytic subunit.